The chain runs to 460 residues: Fumarate hydratase class II (460 aa).

Substrate is bound by residues 95 to 97, 126 to 129, 136 to 138, and threonine 184; these read SGT, HPND, and SSN. Histidine 185 (proton donor/acceptor) is an active-site residue. Serine 315 is a catalytic residue. Substrate contacts are provided by residues serine 316 and 321 to 323; that span reads KVN.

This sequence belongs to the class-II fumarase/aspartase family. Fumarase subfamily. In terms of assembly, homotetramer.

It is found in the cytoplasm. It carries out the reaction (S)-malate = fumarate + H2O. It participates in carbohydrate metabolism; tricarboxylic acid cycle; (S)-malate from fumarate: step 1/1. Its function is as follows. Involved in the TCA cycle. Catalyzes the stereospecific interconversion of fumarate to L-malate. The sequence is that of Fumarate hydratase class II from Chlamydia pneumoniae (Chlamydophila pneumoniae).